A 100-amino-acid polypeptide reads, in one-letter code: Small ribosomal subunit protein uS14c (100 aa).

This sequence belongs to the universal ribosomal protein uS14 family. Part of the 30S ribosomal subunit.

It is found in the plastid. In terms of biological role, binds 16S rRNA, required for the assembly of 30S particles. This Cuscuta reflexa (Southern Asian dodder) protein is Small ribosomal subunit protein uS14c (rps14).